The following is a 238-amino-acid chain: Beta-glucanase (238 aa).

The signal sequence occupies residues 1 to 26 (MMKKKSWFTLMITGVISLFFSVSAFA). One can recognise a GH16 domain in the interval 29 to 238 (VFWEPLSYFN…EYDWVKYTSN (210 aa)). Cys-56 and Cys-85 are joined by a disulfide. Catalysis depends on Glu-129, which acts as the Nucleophile. The active-site Proton donor is the Glu-133.

It belongs to the glycosyl hydrolase 16 family.

The enzyme catalyses Hydrolysis of (1-&gt;4)-beta-D-glucosidic linkages in beta-D-glucans containing (1-&gt;3)- and (1-&gt;4)-bonds.. The chain is Beta-glucanase (gluB) from Paenibacillus polymyxa (Bacillus polymyxa).